The sequence spans 92 residues: Small ribosomal subunit protein uS19 (92 aa).

Belongs to the universal ribosomal protein uS19 family.

In terms of biological role, protein S19 forms a complex with S13 that binds strongly to the 16S ribosomal RNA. The sequence is that of Small ribosomal subunit protein uS19 from Cyanothece sp. (strain PCC 7425 / ATCC 29141).